A 92-amino-acid polypeptide reads, in one-letter code: uncharacterized protein (92 aa).

Positions 1-29 (MAAQTDYKKQVVGILLSLAFVLFVFSFSE) are cleaved as a signal peptide.

This is an uncharacterized protein from Bacillus subtilis (strain 168).